Here is a 637-residue protein sequence, read N- to C-terminus: MNDTIQATDAAHAHSTHQHSMRALAIAAIGVVFGDIGTSPLYALKEAFSPAHGIPLTESSILGVISLLFWAIILVVGIKYLLFVMRADNNGEGGVLALMALSLRPLDPKTRVAGALMALGIFGACMFYGDAVITPAISVMSAVEGLEIATPHLSHLVLPITIVILIALFWIQRHGTALVGKLFGPIMVVWFIVIAALGVYHIARVPGIIAAINPYYAASFMADHLLQAYVVLGSVVLVLTGAEALYADMGHFGAKPIRLAAYGLVMPSLVLNYFGQGALLIQNPKAIENPFFLLAPEWGLLPLVVLSTVATVIASQAVISGAYSLTSQAIQLGYVPRMKVLHTSELAIGQIYVPVVNWLLLFVILCIVIGFKSSDNLAAAYGIAVTATMVITTVLACVVMVKVWNWNRLLVGAIIAVFLAIDLGFFGANLLKVAQGGWLPLGIGALLFFLLMTWYKGRHIVKERTAADGIPLEPFLQGLLAHPPHRVSGTAIYLTGNDKLVPVSLLHNLKHNKVLHERTIFLTFVTRDIPYVRDDTRLSSRDAGGGLYIVKAQYGFNETPDVKAVLEEFGRSHDMTFELMDTSFFLARETVVPTHLPGMSIWRERVFAWMHQNAAKPTDFFSIPANRVVELGTKIEI.

12 helical membrane passes run Leu-24 to Leu-44, Val-64 to Val-84, Ala-113 to Ile-133, Pro-151 to Ile-171, Leu-182 to Ile-202, Leu-225 to Leu-245, Ala-261 to Ile-281, Pro-290 to Ala-310, Ile-351 to Phe-371, Tyr-381 to Val-401, Leu-409 to Asn-429, and Val-433 to Thr-453.

Belongs to the HAK/KUP transporter (TC 2.A.72) family.

The protein resides in the cell inner membrane. The catalysed reaction is K(+)(in) + H(+)(in) = K(+)(out) + H(+)(out). Transport of potassium into the cell. Likely operates as a K(+):H(+) symporter. The protein is Probable potassium transport system protein Kup of Burkholderia ambifaria (strain ATCC BAA-244 / DSM 16087 / CCUG 44356 / LMG 19182 / AMMD) (Burkholderia cepacia (strain AMMD)).